A 184-amino-acid polypeptide reads, in one-letter code: Large ribosomal subunit protein uL6 (184 aa).

This sequence belongs to the universal ribosomal protein uL6 family. Part of the 50S ribosomal subunit.

Functionally, this protein binds to the 23S rRNA, and is important in its secondary structure. It is located near the subunit interface in the base of the L7/L12 stalk, and near the tRNA binding site of the peptidyltransferase center. The polypeptide is Large ribosomal subunit protein uL6 (Thermosipho africanus (strain TCF52B)).